Reading from the N-terminus, the 391-residue chain is Cilia- and flagella-associated protein 263 (391 aa).

Residues 1–21 (MTDDDSETSASETQAQEESDL) form a disordered region. Coiled-coil stretches lie at residues 95–243 (LSVD…NQEL) and 294–369 (LRKE…LKGY).

The protein belongs to the CFAP263 family. As to quaternary structure, forms a complex with CFAP184; the interaction is required for functional activity in cilia. Interacts with HAP1 and PCM1.

The protein resides in the cytoplasm. The protein localises to the cytoskeleton. Its subcellular location is the microtubule organizing center. It localises to the centrosome. It is found in the centriolar satellite. The protein resides in the cell projection. The protein localises to the cilium. In terms of biological role, component of centriolar satellites contributing to primary cilium formation. In complex with CFAP263, acts as a regulator of ciliary beating that connects radial spoke 3 (RS3) to the inner dynein arm (IDA) and the nexin-dynein regulatory complex (N-DRC). The complex is positioned parallel to N-DRC and forms a connection between the arch at the base of RS3, the IDA tail and N-DRC. This chain is Cilia- and flagella-associated protein 263 (CFAP263), found in Bos taurus (Bovine).